Consider the following 475-residue polypeptide: Melanopsin (475 aa).

The Extracellular segment spans residues Met1 to Ser21. A helical membrane pass occupies residues Cys22–Tyr42. At Ser43 to Tyr53 the chain is on the cytoplasmic side. Residues Phe54–Phe74 form a helical membrane-spanning segment. At Leu75–Asn90 the chain is on the extracellular side. A disulfide bridge connects residues Cys89 and Cys167. The helical transmembrane segment at Phe91–Ser111 threads the bilayer. At Val112–Cys134 the chain is on the cytoplasmic side. The helical transmembrane segment at Ile135–Trp155 threads the bilayer. Topologically, residues Ser156–Cys187 are extracellular. A glycan (N-linked (GlcNAc...) asparagine) is linked at Asn178. The helical transmembrane segment at Phe188–Ile208 threads the bilayer. Over Arg209–Lys240 the chain is Cytoplasmic. Residues Ile241 to Leu261 form a helical membrane-spanning segment. Residues Ile262 to Lys276 lie on the Extracellular side of the membrane. The helical transmembrane segment at Ser277–Ile297 threads the bilayer. Position 284 is an N6-(retinylidene)lysine (Lys284). The Cytoplasmic segment spans residues His298–His475. Disordered regions lie at residues Val370–Glu390 and Pro445–His475. The span at Lys375–Ser384 shows a compositional bias: basic residues. The span at Pro445 to Glu454 shows a compositional bias: polar residues. Acidic residues predominate over residues Glu455–Val464. Residues Gln465–His475 show a composition bias toward basic and acidic residues.

It belongs to the G-protein coupled receptor 1 family. Opsin subfamily. Highest level in the lateral eye. Low level in the brain.

It is found in the cell membrane. Functionally, photoreceptor implicated in non-image-forming responses to light. May be able to isomerize covalently bound all-trans retinal back to 11-cis retinal. The sequence is that of Melanopsin (OPN4) from Podarcis siculus (Italian wall lizard).